We begin with the raw amino-acid sequence, 86 residues long: RNA-binding protein Hfq (86 aa).

One can recognise a Sm domain in the interval 9-68 (DPYLNTLRKEKVGVSIYLVNGIKLQGTIESFDQFVILLKNTVSQMVYKHAISTVVPVRPI).

This sequence belongs to the Hfq family. Homohexamer.

In terms of biological role, RNA chaperone that binds small regulatory RNA (sRNAs) and mRNAs to facilitate mRNA translational regulation in response to envelope stress, environmental stress and changes in metabolite concentrations. Also binds with high specificity to tRNAs. The polypeptide is RNA-binding protein Hfq (Pseudomonas fluorescens (strain ATCC BAA-477 / NRRL B-23932 / Pf-5)).